The primary structure comprises 228 residues: Phosphatidylserine decarboxylase proenzyme (228 aa).

Serine 197 serves as the catalytic Schiff-base intermediate with substrate; via pyruvic acid. Serine 197 carries the post-translational modification Pyruvic acid (Ser); by autocatalysis.

Belongs to the phosphatidylserine decarboxylase family. PSD-A subfamily. As to quaternary structure, heterodimer of a large membrane-associated beta subunit and a small pyruvoyl-containing alpha subunit. Pyruvate is required as a cofactor. In terms of processing, is synthesized initially as an inactive proenzyme. Formation of the active enzyme involves a self-maturation process in which the active site pyruvoyl group is generated from an internal serine residue via an autocatalytic post-translational modification. Two non-identical subunits are generated from the proenzyme in this reaction, and the pyruvate is formed at the N-terminus of the alpha chain, which is derived from the carboxyl end of the proenzyme. The post-translation cleavage follows an unusual pathway, termed non-hydrolytic serinolysis, in which the side chain hydroxyl group of the serine supplies its oxygen atom to form the C-terminus of the beta chain, while the remainder of the serine residue undergoes an oxidative deamination to produce ammonia and the pyruvoyl prosthetic group on the alpha chain.

It is found in the cell membrane. It carries out the reaction a 1,2-diacyl-sn-glycero-3-phospho-L-serine + H(+) = a 1,2-diacyl-sn-glycero-3-phosphoethanolamine + CO2. It functions in the pathway phospholipid metabolism; phosphatidylethanolamine biosynthesis; phosphatidylethanolamine from CDP-diacylglycerol: step 2/2. Its function is as follows. Catalyzes the formation of phosphatidylethanolamine (PtdEtn) from phosphatidylserine (PtdSer). The sequence is that of Phosphatidylserine decarboxylase proenzyme from Bacteroides thetaiotaomicron (strain ATCC 29148 / DSM 2079 / JCM 5827 / CCUG 10774 / NCTC 10582 / VPI-5482 / E50).